The sequence spans 746 residues: WD repeat-containing and planar cell polarity effector protein fritz homolog (746 aa).

2 WD repeats span residues 326–374 (IQCV…TLLA) and 375–414 (QTEL…INIQ).

This sequence belongs to the WD repeat fritz family. Component of the CPLANE (ciliogenesis and planar polarity effectors) complex, composed of INTU, FUZ and WDPCP. Interacts with CPLANE1.

Its subcellular location is the cell membrane. The protein localises to the cytoplasm. It localises to the cytoskeleton. The protein resides in the cilium axoneme. It is found in the cilium basal body. Its function is as follows. Probable effector of the planar cell polarity signaling pathway which regulates the septin cytoskeleton in both ciliogenesis and collective cell movements. Together with FUZ and WDPCP proposed to function as core component of the CPLANE (ciliogenesis and planar polarity effectors) complex involved in the recruitment of peripheral IFT-A proteins to basal bodies. Binds phosphatidylinositol 3-phosphate with highest affinity, followed by phosphatidylinositol 4-phosphate and phosphatidylinositol 5-phosphate. This is WD repeat-containing and planar cell polarity effector protein fritz homolog (WDPCP) from Homo sapiens (Human).